Reading from the N-terminus, the 491-residue chain is Proline--tRNA ligase (491 aa).

This sequence belongs to the class-II aminoacyl-tRNA synthetase family. ProS type 3 subfamily. Homodimer.

Its subcellular location is the cytoplasm. The catalysed reaction is tRNA(Pro) + L-proline + ATP = L-prolyl-tRNA(Pro) + AMP + diphosphate. Catalyzes the attachment of proline to tRNA(Pro) in a two-step reaction: proline is first activated by ATP to form Pro-AMP and then transferred to the acceptor end of tRNA(Pro). The chain is Proline--tRNA ligase from Halorubrum lacusprofundi (strain ATCC 49239 / DSM 5036 / JCM 8891 / ACAM 34).